Consider the following 975-residue polypeptide: Glycine dehydrogenase (decarboxylating) (975 aa).

Position 723 is an N6-(pyridoxal phosphate)lysine (K723).

It belongs to the GcvP family. In terms of assembly, the glycine cleavage system is composed of four proteins: P, T, L and H. The cofactor is pyridoxal 5'-phosphate.

It catalyses the reaction N(6)-[(R)-lipoyl]-L-lysyl-[glycine-cleavage complex H protein] + glycine + H(+) = N(6)-[(R)-S(8)-aminomethyldihydrolipoyl]-L-lysyl-[glycine-cleavage complex H protein] + CO2. In terms of biological role, the glycine cleavage system catalyzes the degradation of glycine. The P protein binds the alpha-amino group of glycine through its pyridoxal phosphate cofactor; CO(2) is released and the remaining methylamine moiety is then transferred to the lipoamide cofactor of the H protein. The protein is Glycine dehydrogenase (decarboxylating) of Burkholderia ambifaria (strain MC40-6).